Reading from the N-terminus, the 440-residue chain is Armadillo-like helical domain containing protein 1 (440 aa).

In Homo sapiens (Human), this protein is Armadillo-like helical domain containing protein 1.